We begin with the raw amino-acid sequence, 426 residues long: MSQYQAVKGTKDVFPDEAVQWQLVEGVVRRLAGLYAFGEVRTPVFEYTELFQRGIGATTDIVGKEMFSFLPDPQGRSLTLRPEMTAGVMRAALQRNLLSQAPLHKLFYISDLFRKERPQAGRQRQFTQFGAELLGASSPAAVAEVLSFMMGVFDALGLKGLRLRINTLGDLEDRARYRDALRAYFLPFADELDESSKERLEKNPLRILDSKNPALKELIAAAPRLFDFVKAEGVAEFEEVLSLLRDRGVSYEVDHLLVRGLDYYCHTAFEVTSSELGAQDAIGGGGRYDGLARELGGGKDMPAVGFAVGMERLLIAMEKQGLLEGLKPVGPKVFVVVQQLELSGHAMQVAFQLRRAGISTELDLAGRSMKAQMREANRLGAAYALFIGQTEFESGQYGLKNLVSSEQSTLTLDSITETLREPLLCG.

The protein belongs to the class-II aminoacyl-tRNA synthetase family. Homodimer.

The protein resides in the cytoplasm. It carries out the reaction tRNA(His) + L-histidine + ATP = L-histidyl-tRNA(His) + AMP + diphosphate + H(+). The chain is Histidine--tRNA ligase from Chlorobium phaeovibrioides (strain DSM 265 / 1930) (Prosthecochloris vibrioformis (strain DSM 265)).